The sequence spans 129 residues: Small ribosomal subunit protein uS12 (129 aa).

A 3-methylthioaspartic acid modification is found at Asp89.

The protein belongs to the universal ribosomal protein uS12 family. Part of the 30S ribosomal subunit. Contacts proteins S8 and S17. May interact with IF1 in the 30S initiation complex.

With S4 and S5 plays an important role in translational accuracy. Functionally, interacts with and stabilizes bases of the 16S rRNA that are involved in tRNA selection in the A site and with the mRNA backbone. Located at the interface of the 30S and 50S subunits, it traverses the body of the 30S subunit contacting proteins on the other side and probably holding the rRNA structure together. The combined cluster of proteins S8, S12 and S17 appears to hold together the shoulder and platform of the 30S subunit. The protein is Small ribosomal subunit protein uS12 of Rickettsia akari (strain Hartford).